The sequence spans 361 residues: Phospho-N-acetylmuramoyl-pentapeptide-transferase (361 aa).

Transmembrane regions (helical) follow at residues 27 to 47 (GAIV…ISTL), 72 to 92 (TPTM…LLWA), 94 to 114 (LSNL…LIGF), 133 to 153 (ARLA…INAG), 169 to 189 (LLLD…VAAG), 200 to 220 (GLAI…SYLS), 237 to 257 (VGEL…FLWF), 264 to 284 (IFMG…IAVA), 289 to 309 (IVLA…IVQV), and 338 to 358 (QVVI…LATL).

This sequence belongs to the glycosyltransferase 4 family. MraY subfamily. Requires Mg(2+) as cofactor.

The protein resides in the cell inner membrane. The enzyme catalyses UDP-N-acetyl-alpha-D-muramoyl-L-alanyl-gamma-D-glutamyl-meso-2,6-diaminopimeloyl-D-alanyl-D-alanine + di-trans,octa-cis-undecaprenyl phosphate = di-trans,octa-cis-undecaprenyl diphospho-N-acetyl-alpha-D-muramoyl-L-alanyl-D-glutamyl-meso-2,6-diaminopimeloyl-D-alanyl-D-alanine + UMP. It functions in the pathway cell wall biogenesis; peptidoglycan biosynthesis. Functionally, catalyzes the initial step of the lipid cycle reactions in the biosynthesis of the cell wall peptidoglycan: transfers peptidoglycan precursor phospho-MurNAc-pentapeptide from UDP-MurNAc-pentapeptide onto the lipid carrier undecaprenyl phosphate, yielding undecaprenyl-pyrophosphoryl-MurNAc-pentapeptide, known as lipid I. This Azorhizobium caulinodans (strain ATCC 43989 / DSM 5975 / JCM 20966 / LMG 6465 / NBRC 14845 / NCIMB 13405 / ORS 571) protein is Phospho-N-acetylmuramoyl-pentapeptide-transferase.